The following is a 931-amino-acid chain: Phosphoenolpyruvate carboxylase (931 aa).

Active-site residues include H138 and K594.

This sequence belongs to the PEPCase type 1 family. It depends on Mg(2+) as a cofactor.

It carries out the reaction oxaloacetate + phosphate = phosphoenolpyruvate + hydrogencarbonate. Its function is as follows. Forms oxaloacetate, a four-carbon dicarboxylic acid source for the tricarboxylic acid cycle. The polypeptide is Phosphoenolpyruvate carboxylase (Streptococcus agalactiae serotype III (strain NEM316)).